We begin with the raw amino-acid sequence, 489 residues long: Palmitoyltransferase ZDHHC14 (489 aa).

Over 1–60 (MPPGGGGPMKDCEYSQISTHSSSPMESPHKKKKIAARRKWEVFPGRNKFFCNGRIMMARQ) the chain is Cytoplasmic. The chain crosses the membrane as a helical span at residues 61-81 (TGVFYLTLILILVTSGLFFAF). Topologically, residues 82–89 (DCRYLAEK) are lumenal. Residues 90–110 (ITPAIPVVGGILFFFVMGTLL) form a helical membrane-spanning segment. The Cytoplasmic segment spans residues 111-208 (RTSFSDPGVL…GNCVGKRNYR (98 aa)). Residues 165–215 (KYCFTCKIFRPPRASHCSLCDNCVEQFDHHCPWVGNCVGKRNYRFFYMFIL) enclose the DHHC domain. Cys195 (S-palmitoyl cysteine intermediate) is an active-site residue. Residues 209 to 229 (FFYMFILSLSFLTVFIFAFVI) form a helical membrane-spanning segment. The Lumenal portion of the chain corresponds to 230 to 255 (THVIHRSQQKGFLDALKDSPASVLEA). A helical transmembrane segment spans residues 256–276 (VICFFSVWSIIGLSGFHTYLI). Residues 277–489 (SSNQTTNEDI…VRGLVKLSSV (213 aa)) lie on the Cytoplasmic side of the membrane. The disordered stretch occupies residues 434–454 (HGGHQFLTPDEAPSPPRMLGA). Phosphoserine is present on Ser456.

Belongs to the DHHC palmitoyltransferase family. ERF2/ZDHHC9 subfamily.

It localises to the endoplasmic reticulum membrane. It is found in the golgi apparatus membrane. It catalyses the reaction L-cysteinyl-[protein] + hexadecanoyl-CoA = S-hexadecanoyl-L-cysteinyl-[protein] + CoA. Palmitoyltransferase that could catalyze the addition of palmitate onto various protein substrates. May have a palmitoyltransferase activity toward the beta-2 adrenergic receptor/ADRB2 and thereby regulate G protein-coupled receptor signaling. May play a role in cell differentiation and apoptosis. The chain is Palmitoyltransferase ZDHHC14 from Mus musculus (Mouse).